The following is a 414-amino-acid chain: tRNA(Ile)-lysidine synthase (414 aa).

13–18 (SGGIDS) is a binding site for ATP.

The protein belongs to the tRNA(Ile)-lysidine synthase family.

The protein resides in the cytoplasm. The enzyme catalyses cytidine(34) in tRNA(Ile2) + L-lysine + ATP = lysidine(34) in tRNA(Ile2) + AMP + diphosphate + H(+). In terms of biological role, ligates lysine onto the cytidine present at position 34 of the AUA codon-specific tRNA(Ile) that contains the anticodon CAU, in an ATP-dependent manner. Cytidine is converted to lysidine, thus changing the amino acid specificity of the tRNA from methionine to isoleucine. This chain is tRNA(Ile)-lysidine synthase, found in Thermotoga maritima (strain ATCC 43589 / DSM 3109 / JCM 10099 / NBRC 100826 / MSB8).